The primary structure comprises 354 residues: Falstatin (354 aa).

An N-terminal signal peptide occupies residues 1-21 (MKSITFFVFNICSILALLSHC). Positions 226–236 (LEGNAGTGYLW) match the BC loop; binds and inhibits the active site cavity of cysteine proteases motif. The segment at 274–317 (KYKIDEHDSSKNVNREIESPEQKESDSKPKKPQMQLLGGPDRMR) is disordered. Positions 275-302 (YKIDEHDSSKNVNREIESPEQKESDSKP) are enriched in basic and acidic residues.

The protein belongs to the protease inhibitor I71 family. In terms of assembly, oligomer; probably composed of 10 monomers. During the liver stage, proteolytically cleaved.

The protein resides in the secreted. Its subcellular location is the cytoplasmic vesicle. The protein localises to the secretory vesicle. It is found in the microneme. It localises to the host cytoplasm. The protein resides in the parasitophorous vacuole lumen. In terms of biological role, cysteine protease inhibitor. Required for the invasion of host erythrocytes by merozoites. In the mosquito vector, essential for the gliding motility of hemocoel sporozoites and, therefore, for salivary gland invasion and the subsequent transmission from the mosquito to the mammalian host. Required for the invasion of host hepatocytes. During the liver stage, may prevent host hepatocyte cell death likely by inhibiting host cysteine proteases. This is Falstatin from Plasmodium berghei (strain Anka).